Here is a 445-residue protein sequence, read N- to C-terminus: mRNA cleavage and polyadenylation factor CLP1 (445 aa).

ATP contacts are provided by residues D33, K72, and 133–138; that span reads QTGKTS.

This sequence belongs to the Clp1 family. Clp1 subfamily. As to quaternary structure, component of the cleavage factor IA (CF IA) complex, which is a heterohexameric complex with 2:2:1:1 stoichiometry of RNA14, RNA15, PCF11 and CLP1. It contains 2 copies of an RNA14-RNA15 dimer and 1 copy of CLP1-PCF11. The complex interacts with the cleavage factor HRB1/CF IB to form the cleavage factor I (CF I) complex, and binds to RNA. Interacts directly with PCF11. Interacts with the CPF components CFT1, PTA1, PFS2, YSH1 and SSU72.

The protein resides in the nucleus. Its function is as follows. Component of the cleavage factor IA (CF IA) complex, which is involved in the endonucleolytic cleavage during polyadenylation-dependent pre-mRNA 3'-end formation. Associates with HRB1/CF IB to form the cleavage factor I (CF I) complex. CF I is required for correct positioning of a larger protein complex, the cleavage and polyadenylation factor (CPF) complex, which contains the catalytic subunits executing mRNA cleavage and polyadenylation. CLP1 mediates interactions between CF IA and CPF factors. CLP1 is also involved in maintaining the CF IA interaction with the C-terminal domain of RNA Pol II largest subunit via PCF11, which links pre-mRNA 3'-end processing to transcription termination. This Saccharomyces cerevisiae (strain YJM789) (Baker's yeast) protein is mRNA cleavage and polyadenylation factor CLP1.